An 83-amino-acid polypeptide reads, in one-letter code: Normal mucosa of esophagus-specific gene 1 protein (83 aa).

This sequence belongs to the complex I NDUFA4 subunit family. Expressed mainly in stomach, placenta, small intestine and colon, as well as in normal mucosa of esophagus. Down-regulated in esophageal squamous cell carcinoma.

It localises to the nucleus. The protein is Normal mucosa of esophagus-specific gene 1 protein (NMES1) of Homo sapiens (Human).